Here is a 621-residue protein sequence, read N- to C-terminus: UvrABC system protein C (621 aa).

The 79-residue stretch at 20-98 (MAPGVYCMYA…IKSLAPRYNV (79 aa)) folds into the GIY-YIG domain. One can recognise a UVR domain in the interval 207–242 (DLLAEELIQAMQVASEHLEFEQAARLRDLLTSLRSM).

Belongs to the UvrC family. In terms of assembly, interacts with UvrB in an incision complex.

The protein localises to the cytoplasm. Functionally, the UvrABC repair system catalyzes the recognition and processing of DNA lesions. UvrC both incises the 5' and 3' sides of the lesion. The N-terminal half is responsible for the 3' incision and the C-terminal half is responsible for the 5' incision. The protein is UvrABC system protein C of Xylella fastidiosa (strain 9a5c).